Reading from the N-terminus, the 931-residue chain is GPI ethanolamine phosphate transferase 1 (931 aa).

Position 1 (Met-1) is a topological domain, cytoplasmic. The chain crosses the membrane as a helical span at residues 2 to 24 (LLFFTLGLLIHFVFFASIFDIYF). Residues 25–442 (TSPLVHGMTP…SYYHTYDRFF (418 aa)) lie on the Lumenal side of the membrane. Residues Asn-128, Asn-192, and Asn-350 are each glycosylated (N-linked (GlcNAc...) asparagine). Residues 443–463 (LGVNVVIGFVGWISYASLLII) traverse the membrane as a helical segment. At 464–482 (KSHSNLIKGVSKEVKKPSH) the chain is on the cytoplasmic side. A helical membrane pass occupies residues 483-503 (LLPCSFVAIGILVAFFLLIQA). At 504-508 (CPWTY) the chain is on the lumenal side. Residues 509–529 (YVYGLLPLPIWYAVLREFQVI) traverse the membrane as a helical segment. Topologically, residues 530-543 (QDLVVSVLTYPLSH) are cytoplasmic. The chain crosses the membrane as a helical span at residues 544–564 (FVGYLLAFTLGIEVLVLSFFY). A topological domain (lumenal) is located at residue Arg-565. A helical transmembrane segment spans residues 566 to 586 (YMLTAGLTAFAAWPFLTRLWT). At 587 to 591 (RAKMT) the chain is on the cytoplasmic side. Residues 592–612 (SLSWTFFSLLLAVFPLMPVVG) traverse the membrane as a helical segment. Topologically, residues 613–618 (RKPDIS) are lumenal. A helical membrane pass occupies residues 619 to 639 (LVMGAGLLVLLLSLCVVTSLM). Over 640–649 (KRKDSFIKEE) the chain is Cytoplasmic. A helical membrane pass occupies residues 650 to 670 (LLVHLLQVLSTVLSMYVVYST). The Lumenal segment spans residues 671-685 (QSSLLRKQGLPLMNQ). The chain crosses the membrane as a helical span at residues 686–706 (IISWATLASSLVVPLLSSPVL). The Cytoplasmic portion of the chain corresponds to 707-723 (FQRLFSILLSLMSTYLL). A helical transmembrane segment spans residues 724-744 (LSTGYEALFPLVLSCLMFVWI). Residues 745–786 (NIEQETLQQSGVCCKQKLTSIQFSYNTDITQFRQLYLDDIRR) lie on the Lumenal side of the membrane. A helical membrane pass occupies residues 787–807 (AFFLVFFLVTAFFGTGNIASI). The Cytoplasmic segment spans residues 808–824 (NSFDLASVYCFLTVFSP). A helical transmembrane segment spans residues 825–845 (FMMGALMMWKILIPFVLVMCA). Residues 846-858 (FEAVQLTTQLSSK) are Lumenal-facing. A helical membrane pass occupies residues 859–879 (SLFLIVLVISDIMALHFFFLV). Residues 880–894 (KDYGSWLDIGTSISH) are Cytoplasmic-facing. The chain crosses the membrane as a helical span at residues 895–915 (YVIVMSMTIFLVFLNGLAQLL). Topologically, residues 916 to 931 (TTKKLRLCGKPKSHFM) are lumenal.

It belongs to the PIGG/PIGN/PIGO family. PIGN subfamily.

It is found in the endoplasmic reticulum membrane. It participates in glycolipid biosynthesis; glycosylphosphatidylinositol-anchor biosynthesis. Functionally, ethanolamine phosphate transferase that catalyzes an ethanolamine phosphate (EtNP) transfer from phosphatidylethanolamine (PE) to the 2-OH position of the first alpha-1,4-linked mannose of the alpha-D-Man-(1-&gt;6)-alpha-D-Man-(1-&gt;4)-alpha-D-GlcN-(1-&gt;6)-(1-radyl,2-acyl-sn-glycero-3-phospho)-2-acyl-inositol (also termed H3) intermediate to generate an alpha-D-Man-(1-&gt;6)-2-PEtn-alpha-D-Man-(1-&gt;4)-alpha-D-GlcN-(1-&gt;6)-(1-radyl,2-acyl-sn-glycero-3-phospho)-2-acyl-inositol and participates in the eighth step of the glycosylphosphatidylinositol-anchor biosynthesis. May act as suppressor of replication stress and chromosome missegregation. This Homo sapiens (Human) protein is GPI ethanolamine phosphate transferase 1.